Here is a 159-residue protein sequence, read N- to C-terminus: uncharacterized protein (159 aa).

4 consecutive transmembrane segments (helical) span residues 5–27 (TLDL…RGFV), 34–51 (ASIL…KRLV), 61–83 (SILL…MLFL), and 103–125 (FGFF…LLHV).

Its subcellular location is the cell membrane. This is an uncharacterized protein from Treponema pallidum (strain Nichols).